Consider the following 165-residue polypeptide: Transcription elongation factor A protein-like 1 (165 aa).

Disordered regions lie at residues Met-1 to Glu-66 and Ile-89 to His-124. Positions Cys-33–Leu-60 are enriched in acidic residues. Basic and acidic residues predominate over residues His-101–His-124.

The protein belongs to the TFS-II family. TFA subfamily.

It is found in the nucleus. Functionally, may be involved in transcriptional regulation. Modulates various viral and cellular promoters in a promoter context-dependent manner. Does not bind DNA directly. This is Transcription elongation factor A protein-like 1 from Rattus norvegicus (Rat).